The chain runs to 80 residues: Clavanin-E (80 aa).

The N-terminal stretch at 1–19 (MKTTILILLILGLGINAKS) is a signal peptide. Positions 20–29 (LEERKSEEEK) are excised as a propeptide. Phenylalanine 52 carries the phenylalanine amide modification. Residues 54 to 80 (DDQQDNGKFYGYYAEDNGKHWYDTGDQ) constitute a propeptide that is removed on maturation.

The protein localises to the secreted. Its function is as follows. Has antimicrobial activity. This is Clavanin-E from Styela clava (Sea squirt).